A 539-amino-acid chain; its full sequence is MHAKGLTAADLASYGISDVTEIVHNPDYDLLFKEETAPGLQGYERGTVTSLGAVAVDTGIFTGRSPKDKYLVRDDTTRDTVWWSDQGKGKNDNRPLSPEVWQHLKGLVTRQLSNKRLFVVDAYCGANPDSRLKVRFITEVAWQAHFVKNMFIRPEADELAGFEPDFIVMNGAKCTNPQWQAQGLNSENFVAFNLTERIQLIGGTWYGGEMKKGMFSIMNYLLPLKGIASMHCSANVGEQGDVAIFFGLSGTGKTTLSTDPKRRLIGDDEHGWDDDGVFNFEGGCYAKTIKLSADAEPDIYGAITRDALLENVTVRADGSVDFDDGSKTENTRVSYPIYHIKNIVKPVSKAGAAKKVIFLTADAFGVLPPVSRLTADQTQYHFLSGFTAKLAGTERGVTEPTPTFSACFGAAFLTLHPTQYAEVLVRRMQAAGAQAYLVNTGWNGSGKRISIKDTRAIIDAILNGDIDRVETFTLPIFNLAVPIELPGVNPAILDPRDTYANREQWQEKAQDLAQRFITNFDKYTDTPAGAALVHAGPRR.

3 residues coordinate substrate: arginine 64, tyrosine 206, and lysine 212. Residues lysine 212, histidine 231, and glycine 247–threonine 255 contribute to the ATP site. Positions 212 and 231 each coordinate Mn(2+). Aspartate 268 serves as a coordination point for Mn(2+). ATP-binding positions include glutamate 296, arginine 332, arginine 448–isoleucine 449, and threonine 454. A substrate-binding site is contributed by arginine 332.

Belongs to the phosphoenolpyruvate carboxykinase (ATP) family. As to quaternary structure, monomer. It depends on Mn(2+) as a cofactor.

The protein localises to the cytoplasm. It carries out the reaction oxaloacetate + ATP = phosphoenolpyruvate + ADP + CO2. Its pathway is carbohydrate biosynthesis; gluconeogenesis. In terms of biological role, involved in the gluconeogenesis. Catalyzes the conversion of oxaloacetate (OAA) to phosphoenolpyruvate (PEP) through direct phosphoryl transfer between the nucleoside triphosphate and OAA. This Edwardsiella ictaluri (strain 93-146) protein is Phosphoenolpyruvate carboxykinase (ATP).